A 192-amino-acid polypeptide reads, in one-letter code: Adenylate kinase (192 aa).

10–18 (GVPGVGGTT) is an ATP binding site.

This sequence belongs to the archaeal adenylate kinase family. In terms of assembly, monomer.

It localises to the cytoplasm. It catalyses the reaction AMP + ATP = 2 ADP. This Methanococcus maripaludis (strain C7 / ATCC BAA-1331) protein is Adenylate kinase.